The following is a 246-amino-acid chain: MSGHNKWSSIKHKKGAADAKRGKVFTKLIKEITLAARTGGGDPDGNPRLRTAIAAAKDENMPKDNIERAIKKGTGDLEGVNYEENTYEGYGPGGAAVLVESLTDNKNRAVSEIRHIFSKHNGNMGENGCVAWMFDKKGYIEVEKSAAEEDHLMEVAIEAGAEDVRESDDTFEVITEVEDLETVRQALDGASIQYAFAEITMLPQTMVDLDDKTSEQMIRLLDALDDCEDVQKVYTNASLSDSVGEA.

Belongs to the TACO1 family.

The protein localises to the cytoplasm. The protein is Probable transcriptional regulatory protein Dole_0371 of Desulfosudis oleivorans (strain DSM 6200 / JCM 39069 / Hxd3) (Desulfococcus oleovorans).